Consider the following 201-residue polypeptide: MKSTGEATAINIGETKSASATTVATTKAIQHPKAGLKRGLAIFDFILRLSAIGAALAATTTMGTTDQTLPFFTQFFQFQASYDDLPAFSFFVIANAIASGYLFLSLPFSIVCIVRPHAMGARLLLVICDTVMVALTIAAAAAAAAIVYLAHNGNSNANWVAICQQFDDFCQSVSGAVVASFIAAVLFMLMIVLSAFSLRKH.

Over 1 to 38 (MKSTGEATAINIGETKSASATTVATTKAIQHPKAGLKR) the chain is Cytoplasmic. Residues 39 to 59 (GLAIFDFILRLSAIGAALAAT) traverse the membrane as a helical segment. Topologically, residues 60 to 89 (TTMGTTDQTLPFFTQFFQFQASYDDLPAFS) are extracellular. A helical membrane pass occupies residues 90 to 110 (FFVIANAIASGYLFLSLPFSI). Residues 111 to 129 (VCIVRPHAMGARLLLVICD) lie on the Cytoplasmic side of the membrane. A helical transmembrane segment spans residues 130–150 (TVMVALTIAAAAAAAAIVYLA). Residues 151–175 (HNGNSNANWVAICQQFDDFCQSVSG) lie on the Extracellular side of the membrane. Residues 176–196 (AVVASFIAAVLFMLMIVLSAF) form a helical membrane-spanning segment. Over 197 to 201 (SLRKH) the chain is Cytoplasmic.

This sequence belongs to the Casparian strip membrane proteins (CASP) family. As to quaternary structure, homodimer and heterodimers.

It is found in the cell membrane. In terms of biological role, regulates membrane-cell wall junctions and localized cell wall deposition. Required for establishment of the Casparian strip membrane domain (CSD) and the subsequent formation of Casparian strips, a cell wall modification of the root endodermis that determines an apoplastic barrier between the intraorganismal apoplasm and the extraorganismal apoplasm and prevents lateral diffusion. In Vitis vinifera (Grape), this protein is Casparian strip membrane protein 2.